The following is a 419-amino-acid chain: Serine--tRNA ligase (419 aa).

226 to 228 lines the L-serine pocket; that stretch reads TSE. Residues 257–259 and Val273 contribute to the ATP site; that span reads RRE. L-serine is bound at residue Glu280. 344–347 provides a ligand contact to ATP; that stretch reads ELTS. Thr379 contributes to the L-serine binding site.

It belongs to the class-II aminoacyl-tRNA synthetase family. Type-1 seryl-tRNA synthetase subfamily. Homodimer. The tRNA molecule binds across the dimer.

It localises to the cytoplasm. It catalyses the reaction tRNA(Ser) + L-serine + ATP = L-seryl-tRNA(Ser) + AMP + diphosphate + H(+). It carries out the reaction tRNA(Sec) + L-serine + ATP = L-seryl-tRNA(Sec) + AMP + diphosphate + H(+). It functions in the pathway aminoacyl-tRNA biosynthesis; selenocysteinyl-tRNA(Sec) biosynthesis; L-seryl-tRNA(Sec) from L-serine and tRNA(Sec): step 1/1. Functionally, catalyzes the attachment of serine to tRNA(Ser). Is also able to aminoacylate tRNA(Sec) with serine, to form the misacylated tRNA L-seryl-tRNA(Sec), which will be further converted into selenocysteinyl-tRNA(Sec). This Mycolicibacterium vanbaalenii (strain DSM 7251 / JCM 13017 / BCRC 16820 / KCTC 9966 / NRRL B-24157 / PYR-1) (Mycobacterium vanbaalenii) protein is Serine--tRNA ligase.